Here is a 257-residue protein sequence, read N- to C-terminus: Flagellar brake protein YcgR 2 (257 aa).

A PilZ domain is found at 131–244 (QRREFFRVQT…AERTLQRVVT (114 aa)).

Belongs to the YcgR family. As to quaternary structure, monomer. Interacts with the flagellar basal bodies.

The protein resides in the bacterial flagellum basal body. In terms of biological role, acts as a flagellar brake, regulating swimming and swarming in a bis-(3'-5') cyclic diguanylic acid (c-di-GMP)-dependent manner. Binds 1 c-di-GMP dimer per subunit. Increasing levels of c-di-GMP lead to decreased motility. This chain is Flagellar brake protein YcgR 2, found in Paraburkholderia phytofirmans (strain DSM 17436 / LMG 22146 / PsJN) (Burkholderia phytofirmans).